A 788-amino-acid chain; its full sequence is MSSHTVSTSLAVATLGTPRIGPRRELKSALESFWAGKSTEADLLKVAAALRAANWARQSARGVSVIPSNDFSLYDQVLDTSVMVGAIPEIYGWRGGPVSLATYFAMARGTQAEIAGHGCANGHHHGDSTPQGVPAQEMTKWFDTNYHYMVPEFSAGQSFQLASVKPLEEYREAKALGYDTRPVLLGPVTYLKLGKSADAGLDVLSLLPKLVPVYIEILGRLAAAGAKWVQLDEPALVLDLDDRERLAFRDAYGQIARELPHLDIMLTTYFGGLGDNLDTALALPIAGLHLDLVRAPKQINAVIAKGPKDLVLSLGVVDGRNIWRADLPDLLDRVEPIVQQRGAERVQLAPSCSLLHVPVDLELETGLDPDLKSWLSFSLQKMGELSTLSRALSGDRAAVQDQLSASAKAAATRRKSPKVHDMAVSSRAAAVTPAMTQRNSGFAARATLQHQRLQLPAFPTTTIGSFPQTAQIRQARAAHAKGAISDADYNTFLRGETARAIQWQEKVGLDVLVHGEFERNDMVQYFGEQLSGFAFTKEGWVQSYGSRCVRPPILFGDVSRPKPMTVGWWKYAQSLTGRPMKGMLTGPVTILNWSFVRDDVPRSTACLQIALAIRDEVGDLEQAGATMIQIDEAALREGLPLRRSEWKGYLDWAVECFRLCSSGVKDETQIHTHMCYSEFNDIIDAIAAMDADVISIETSRSKMELLDAFKTYKYPNEIGPGVYDIHSPRVPSVEEMTTLLQLARQRLSDGQLWVNPDCGLKTRGWDEVQGALVNMVEAARQIRQVSAG.

Residues 24 to 27 (RELK) and Lys140 contribute to the 5-methyltetrahydropteroyltri-L-glutamate site. L-homocysteine is bound by residues 463–465 (IGS) and Glu516. Residues 463–465 (IGS) and Glu516 each bind L-methionine. 5-methyltetrahydropteroyltri-L-glutamate-binding positions include 547–548 (RC) and Trp593. Residue Asp631 participates in L-homocysteine binding. An L-methionine-binding site is contributed by Asp631. Glu637 contacts 5-methyltetrahydropteroyltri-L-glutamate. Zn(2+)-binding residues include His673, Cys675, and Glu697. His726 acts as the Proton donor in catalysis. Cys758 serves as a coordination point for Zn(2+).

The protein belongs to the vitamin-B12 independent methionine synthase family. Zn(2+) is required as a cofactor.

It carries out the reaction 5-methyltetrahydropteroyltri-L-glutamate + L-homocysteine = tetrahydropteroyltri-L-glutamate + L-methionine. It functions in the pathway amino-acid biosynthesis; L-methionine biosynthesis via de novo pathway; L-methionine from L-homocysteine (MetE route): step 1/1. Functionally, catalyzes the transfer of a methyl group from 5-methyltetrahydrofolate to homocysteine resulting in methionine formation. The protein is 5-methyltetrahydropteroyltriglutamate--homocysteine methyltransferase of Rhodopseudomonas palustris (strain ATCC BAA-98 / CGA009).